Reading from the N-terminus, the 415-residue chain is MAESKNNKKRCSFCGRSENEVGFLITGMNGYICDSCATQAYEITQEAMGAGKQSAGATRLNLKELPKPVEIKNFLDQYVIGQDDAKRFLAVSVYNHYKRLLQKDSGDDVEIEKSNIIMVGSTGTGKTLLARTIAKLLHVPFTIVDATVLTEAGYVGEDIESILTRLLQVADYNVPEAEQGIVFIDEIDKIARKGDNPSITRDVSGEGVQQGLLKLLEGSVVNVPPQGGRKHPDQKMIPVNTKNILFICGGAFDGIEKKIAQRLNTHVVGYNASRKTATIDKNNMMQYIAPQDLKSFGLIPEIIGRLPVLTYLNPLDRNALRAILTEPKNSIIKQYIKLFEMDGVKLTFQPEVYEYIVDKAVEYKLGARGLRSIVETIMMDVMFEIPSEDQKEYEVTLDYAKHQLEKANLARLQTA.

The region spanning 1-52 is the ClpX-type ZB domain; that stretch reads MAESKNNKKRCSFCGRSENEVGFLITGMNGYICDSCATQAYEITQEAMGAGK. Zn(2+) contacts are provided by Cys11, Cys14, Cys33, and Cys36. 121–128 lines the ATP pocket; sequence STGTGKTL.

It belongs to the ClpX chaperone family. As to quaternary structure, component of the ClpX-ClpP complex. Forms a hexameric ring that, in the presence of ATP, binds to fourteen ClpP subunits assembled into a disk-like structure with a central cavity, resembling the structure of eukaryotic proteasomes.

Functionally, ATP-dependent specificity component of the Clp protease. It directs the protease to specific substrates. Can perform chaperone functions in the absence of ClpP. The polypeptide is ATP-dependent Clp protease ATP-binding subunit ClpX (Bacteroides fragilis (strain ATCC 25285 / DSM 2151 / CCUG 4856 / JCM 11019 / LMG 10263 / NCTC 9343 / Onslow / VPI 2553 / EN-2)).